Consider the following 414-residue polypeptide: Eukaryotic initiation factor 4A-3 (414 aa).

Alanine 2 is subject to N-acetylalanine. The Q motif signature appears at 41-69 (DSFDAMELQPDLLRGIYAYGFEKPSAIQQ). The region spanning 72–242 (IIPFCKGLDV…RKFMNKPVRI (171 aa)) is the Helicase ATP-binding domain. 85 to 92 (AQSGTGKT) serves as a coordination point for ATP. Position 106 is a phosphoserine (serine 106). Residue threonine 147 is modified to Phosphothreonine. A DEAD box motif is present at residues 190–193 (DEAD). The Helicase C-terminal domain maps to 253–414 (GIKQFYVNVD…ELPSNVADLL (162 aa)).

The protein belongs to the DEAD box helicase family. eIF4A subfamily. In terms of assembly, eIF4F is a multi-subunit complex, the composition of which varies with external and internal environmental conditions. It is composed of at least EIF4A, EIF4E and EIF4G.

Its subcellular location is the cytoplasm. The enzyme catalyses ATP + H2O = ADP + phosphate + H(+). Functionally, ATP-dependent RNA helicase which is a subunit of the eIF4F complex involved in cap recognition and is required for mRNA binding to ribosome. In the current model of translation initiation, eIF4A unwinds RNA secondary structures in the 5'-UTR of mRNAs which is necessary to allow efficient binding of the small ribosomal subunit, and subsequent scanning for the initiator codon. The sequence is that of Eukaryotic initiation factor 4A-3 (TIF4A-3) from Arabidopsis thaliana (Mouse-ear cress).